Here is a 301-residue protein sequence, read N- to C-terminus: Probable alpha-L-glutamate ligase 1 (301 aa).

The ATP-grasp domain maps to 104-287 (LQLLSRKNIG…VAEKIIQFIE (184 aa)). Residues Lys141, 178-179 (EY), Asp187, and 211-213 (RSN) each bind ATP. Mg(2+) contacts are provided by Asp248, Glu260, and Asn262. Mn(2+) is bound by residues Asp248, Glu260, and Asn262.

Belongs to the RimK family. Mg(2+) is required as a cofactor. Requires Mn(2+) as cofactor.

This is Probable alpha-L-glutamate ligase 1 from Shewanella frigidimarina (strain NCIMB 400).